Reading from the N-terminus, the 400-residue chain is Opsin-3 (400 aa).

At 1-38 (MYSGNRSGDQGYWEDGAGAEGAAPAGTRSPAPLFSPTA) the chain is on the extracellular side. An N-linked (GlcNAc...) asparagine glycan is attached at Asn-5. A helical membrane pass occupies residues 39–63 (YERLALLLGCLALLGVGGNLLVLLL). Residues 64–75 (YSKFPRLRTPTH) are Cytoplasmic-facing. Residues 76–100 (LFLVNLSLGDLLVSLFGVTFTFASC) form a helical membrane-spanning segment. At 101–115 (LRNGWVWDAVGCAWD) the chain is on the extracellular side. Cys-112 and Cys-186 are joined by a disulfide. Residues 116-135 (GFSGSLFGFVSITTLTVLAY) traverse the membrane as a helical segment. Residues 136–151 (ERYIRVVHARVINFSW) are Cytoplasmic-facing. A helical transmembrane segment spans residues 152–175 (AWRAITYIWLYSLAWAGAPLLGWN). Residues 176–199 (RYILDIHGLGCTVDWRSKDANDSS) are Extracellular-facing. A glycan (N-linked (GlcNAc...) asparagine) is linked at Asn-196. Residues 200–227 (FVLFLFLGCLVVPVGIIAHCYGHILYSV) form a helical membrane-spanning segment. Topologically, residues 228–253 (RMLRCVEDLQTIQVIKMLRYEKKVAK) are cytoplasmic. Residues 254–277 (MCFLMAFVFLTCWMPYIVTRFLVV) traverse the membrane as a helical segment. Topologically, residues 278–285 (NGYGHLVT) are extracellular. The chain crosses the membrane as a helical span at residues 286 to 310 (PTVSIVSYLFAKSSTVYNPVIYIFM). Residue Lys-297 is modified to N6-(retinylidene)lysine. Residues 311–400 (NRKFRRSLLQ…KVDVIQVRPL (90 aa)) are Cytoplasmic-facing. Cys-323 carries S-palmitoyl cysteine lipidation.

It belongs to the G-protein coupled receptor 1 family. Opsin subfamily. As to quaternary structure, interacts with MC1R; the interaction results in a decrease in MC1R-mediated cAMP signaling and ultimately a decrease in melanin production in melanocytes. As to expression, expressed in the eye (at protein level). Expressed in tracheal airway smooth muscle. Expressed in brown adipocyte tissue; expression becomes more abundant during differentiation. Strongly expressed in brain. Highly expressed in the preoptic area and paraventricular nucleus of the hypothalamus. Shows highly patterned expression in other regions of the brain, being enriched in selected regions of the cerebral cortex, cerebellar Purkinje cells, a subset of striatal neurons, selected thalamic nuclei, and a subset of interneurons in the ventral horn of the spinal cord.

The protein resides in the cell membrane. The protein localises to the cytoplasm. G-protein coupled receptor which selectively activates G proteins via ultraviolet A (UVA) light-mediated activation in the skin. Binds both 11-cis retinal and all-trans retinal. Regulates melanogenesis in melanocytes via inhibition of alpha-MSH-induced MC1R-mediated cAMP signaling, modulation of calcium flux, regulation of CAMK2 phosphorylation, and subsequently phosphorylation of CREB, p38, ERK and MITF in response to blue light. Plays a role in melanocyte survival through regulation of intracellular calcium levels and subsequent BCL2/RAF1 signaling. Additionally regulates apoptosis via cytochrome c release and subsequent activation of the caspase cascade. Required for TYR and DCT blue light-induced complex formation in melanocytes. Involved in keratinocyte differentiation in response to blue-light. Required for the UVA-mediated induction of calcium and mitogen-activated protein kinase signaling resulting in the expression of MMP1, MMP2, MMP3, MMP9 and TIMP1 in dermal fibroblasts. Plays a role in light-mediated glucose uptake, mitochondrial respiration and fatty acid metabolism in brown adipocyte tissues. May be involved in photorelaxation of airway smooth muscle cells, via blue-light dependent GPCR signaling pathways. This chain is Opsin-3 (Opn3), found in Mus musculus (Mouse).